Reading from the N-terminus, the 673-residue chain is UvrABC system protein B (673 aa).

A Helicase ATP-binding domain is found at 30-417; the sequence is NSILLGNKYQ…SSVVVDQIIR (388 aa). 43-50 is a binding site for ATP; sequence GVTGSGKT. The Beta-hairpin motif lies at 96–119; it reads YYDYYQPESYVPSKDLFIEKEATI. A Helicase C-terminal domain is found at 434–600; it reads QMEDLYSEIQ…TIVKKIQNIL (167 aa). The region spanning 627–662 is the UVR domain; that stretch reads KKLIDKLKFDLEEAVNDERFEDAIVLRDKIKELSSK.

It belongs to the UvrB family. Forms a heterotetramer with UvrA during the search for lesions. Interacts with UvrC in an incision complex.

The protein resides in the cytoplasm. Functionally, the UvrABC repair system catalyzes the recognition and processing of DNA lesions. A damage recognition complex composed of 2 UvrA and 2 UvrB subunits scans DNA for abnormalities. Upon binding of the UvrA(2)B(2) complex to a putative damaged site, the DNA wraps around one UvrB monomer. DNA wrap is dependent on ATP binding by UvrB and probably causes local melting of the DNA helix, facilitating insertion of UvrB beta-hairpin between the DNA strands. Then UvrB probes one DNA strand for the presence of a lesion. If a lesion is found the UvrA subunits dissociate and the UvrB-DNA preincision complex is formed. This complex is subsequently bound by UvrC and the second UvrB is released. If no lesion is found, the DNA wraps around the other UvrB subunit that will check the other stand for damage. This chain is UvrABC system protein B, found in Borreliella burgdorferi (strain ATCC 35210 / DSM 4680 / CIP 102532 / B31) (Borrelia burgdorferi).